The sequence spans 312 residues: Glycerol-3-phosphate dehydrogenase [NAD(P)+] (312 aa).

Residues Trp-11, Arg-30, Arg-31, and Lys-95 each coordinate NADPH. Sn-glycerol 3-phosphate contacts are provided by Lys-95, Gly-123, and Ser-125. Residue Ala-127 participates in NADPH binding. Sn-glycerol 3-phosphate contacts are provided by Lys-177, Asp-230, Ser-240, Arg-241, and Asn-242. Lys-177 serves as the catalytic Proton acceptor. Arg-241 provides a ligand contact to NADPH. NADPH contacts are provided by Val-265 and Glu-267.

It belongs to the NAD-dependent glycerol-3-phosphate dehydrogenase family.

Its subcellular location is the cytoplasm. The catalysed reaction is sn-glycerol 3-phosphate + NAD(+) = dihydroxyacetone phosphate + NADH + H(+). It catalyses the reaction sn-glycerol 3-phosphate + NADP(+) = dihydroxyacetone phosphate + NADPH + H(+). It functions in the pathway membrane lipid metabolism; glycerophospholipid metabolism. Its function is as follows. Catalyzes the reduction of the glycolytic intermediate dihydroxyacetone phosphate (DHAP) to sn-glycerol 3-phosphate (G3P), the key precursor for phospholipid synthesis. This chain is Glycerol-3-phosphate dehydrogenase [NAD(P)+], found in Helicobacter pylori (strain P12).